The following is a 95-amino-acid chain: Aspartyl/glutamyl-tRNA(Asn/Gln) amidotransferase subunit C (95 aa).

Belongs to the GatC family. Heterotrimer of A, B and C subunits.

The catalysed reaction is L-glutamyl-tRNA(Gln) + L-glutamine + ATP + H2O = L-glutaminyl-tRNA(Gln) + L-glutamate + ADP + phosphate + H(+). It catalyses the reaction L-aspartyl-tRNA(Asn) + L-glutamine + ATP + H2O = L-asparaginyl-tRNA(Asn) + L-glutamate + ADP + phosphate + 2 H(+). Functionally, allows the formation of correctly charged Asn-tRNA(Asn) or Gln-tRNA(Gln) through the transamidation of misacylated Asp-tRNA(Asn) or Glu-tRNA(Gln) in organisms which lack either or both of asparaginyl-tRNA or glutaminyl-tRNA synthetases. The reaction takes place in the presence of glutamine and ATP through an activated phospho-Asp-tRNA(Asn) or phospho-Glu-tRNA(Gln). The polypeptide is Aspartyl/glutamyl-tRNA(Asn/Gln) amidotransferase subunit C (Bradyrhizobium sp. (strain ORS 278)).